The following is a 449-amino-acid chain: Glutamate--tRNA ligase (449 aa).

The short motif at 10 to 20 is the 'HIGH' region element; it reads PSPTGHLHIGN. Positions 214-218 match the 'KMSKS' region motif; that stretch reads KLSKR. An ATP-binding site is contributed by K217.

It belongs to the class-I aminoacyl-tRNA synthetase family. Glutamate--tRNA ligase type 1 subfamily. As to quaternary structure, monomer.

The protein resides in the cytoplasm. The enzyme catalyses tRNA(Glu) + L-glutamate + ATP = L-glutamyl-tRNA(Glu) + AMP + diphosphate. Catalyzes the attachment of glutamate to tRNA(Glu) in a two-step reaction: glutamate is first activated by ATP to form Glu-AMP and then transferred to the acceptor end of tRNA(Glu). This is Glutamate--tRNA ligase from Acholeplasma laidlawii (strain PG-8A).